The following is a 93-amino-acid chain: Pyrimidine/purine nucleoside phosphorylase (93 aa).

This sequence belongs to the nucleoside phosphorylase PpnP family.

It carries out the reaction a purine D-ribonucleoside + phosphate = a purine nucleobase + alpha-D-ribose 1-phosphate. The enzyme catalyses adenosine + phosphate = alpha-D-ribose 1-phosphate + adenine. The catalysed reaction is cytidine + phosphate = cytosine + alpha-D-ribose 1-phosphate. It catalyses the reaction guanosine + phosphate = alpha-D-ribose 1-phosphate + guanine. It carries out the reaction inosine + phosphate = alpha-D-ribose 1-phosphate + hypoxanthine. The enzyme catalyses thymidine + phosphate = 2-deoxy-alpha-D-ribose 1-phosphate + thymine. The catalysed reaction is uridine + phosphate = alpha-D-ribose 1-phosphate + uracil. It catalyses the reaction xanthosine + phosphate = alpha-D-ribose 1-phosphate + xanthine. Its function is as follows. Catalyzes the phosphorolysis of diverse nucleosides, yielding D-ribose 1-phosphate and the respective free bases. Can use uridine, adenosine, guanosine, cytidine, thymidine, inosine and xanthosine as substrates. Also catalyzes the reverse reactions. The chain is Pyrimidine/purine nucleoside phosphorylase from Tolumonas auensis (strain DSM 9187 / NBRC 110442 / TA 4).